Consider the following 518-residue polypeptide: Cytochrome P450 26C1 (518 aa).

A helical transmembrane segment spans residues 293-313 (LLFAAFFTTASASTSLILLLL). Cys-455 serves as a coordination point for heme.

Belongs to the cytochrome P450 family. The cofactor is heme.

It localises to the membrane. The catalysed reaction is an organic molecule + reduced [NADPH--hemoprotein reductase] + O2 = an alcohol + oxidized [NADPH--hemoprotein reductase] + H2O + H(+). It catalyses the reaction all-trans-retinoate + reduced [NADPH--hemoprotein reductase] + O2 = all-trans-4-hydroxyretinoate + oxidized [NADPH--hemoprotein reductase] + H2O + H(+). The enzyme catalyses all-trans-4-hydroxyretinoate + reduced [NADPH--hemoprotein reductase] + O2 = all-trans-4-oxoretinoate + oxidized [NADPH--hemoprotein reductase] + 2 H2O + H(+). It carries out the reaction 9-cis-retinoate + reduced [NADPH--hemoprotein reductase] + O2 = 9-cis-4-hydroxyretinoate + oxidized [NADPH--hemoprotein reductase] + H2O + H(+). The catalysed reaction is 9-cis-4-hydroxyretinoate + reduced [NADPH--hemoprotein reductase] + O2 = 9-cis-4-oxoretinoate + oxidized [NADPH--hemoprotein reductase] + 2 H2O + H(+). It catalyses the reaction all-trans-4-hydroxy-13,14-dihydroretinoate + reduced [NADPH--hemoprotein reductase] + O2 = all-trans-4-oxo-13,14-dihydroretinoate + oxidized [NADPH--hemoprotein reductase] + 2 H2O + H(+). The enzyme catalyses all-trans-13,14-dihydroretinoate + reduced [NADPH--hemoprotein reductase] + O2 = all-trans-4-hydroxy-13,14-dihydroretinoate + oxidized [NADPH--hemoprotein reductase] + H2O + H(+). A cytochrome P450 monooxygenase involved in the metabolism of retinoates (RAs), the active metabolites of vitamin A, and critical signaling molecules in animals. RAs exist as at least four different isomers: all-trans-RA (atRA), 9-cis-RA, 13-cis-RA, and 9,13-dicis-RA, where atRA is considered to be the biologically active isomer, although 9-cis-RA and 13-cis-RA also have activity. Catalyzes the oxidation of atRA primarily at C-4. Oxidation of atRA limits its biological activity and initiates a degradative process leading to its eventual elimination, thereby contributes to the regulation of atRA homeostasis and signaling. Able to metabolize other RAs such as 9-cis with high efficiency. Can oxidize all-trans-13,14-dihydroretinoate (DRA) to metabolites which could include all-trans-4-oxo-DRA, all-trans-4-hydroxy-DRA, all-trans-5,8-epoxy-DRA, and all-trans-18-hydroxy-DRA. Shares sequence similarity with other CYP26 family members, but has higher affinity to 9-cis-RA and is much less sensitive to the inhibitory effects of ketoconazole. In cooperation with Cyp26a1, contributes to the CNS patterning and the development of regions of higher visual acuity. In Mus musculus (Mouse), this protein is Cytochrome P450 26C1.